Here is a 370-residue protein sequence, read N- to C-terminus: Galactose-1-phosphate uridylyltransferase (370 aa).

Positions 51 and 54 each coordinate Zn(2+). Residues A60 and N76–G77 each bind UDP-alpha-D-glucose. Position 121 (H121) interacts with Zn(2+). Residue N166 participates in UDP-alpha-D-glucose binding. Zn(2+) is bound at residue H177. The active-site Tele-UMP-histidine intermediate is H179. Q181 contributes to the UDP-alpha-D-glucose binding site. The Fe cation site is built by E195, H294, H311, and H313. Residues K326 to V329 and F331 to E332 each bind UDP-alpha-D-glucose.

This sequence belongs to the galactose-1-phosphate uridylyltransferase type 1 family. Homodimer. Zn(2+) is required as a cofactor.

The enzyme catalyses alpha-D-galactose 1-phosphate + UDP-alpha-D-glucose = alpha-D-glucose 1-phosphate + UDP-alpha-D-galactose. It functions in the pathway carbohydrate metabolism; galactose metabolism. The protein is Galactose-1-phosphate uridylyltransferase (GAL7) of Kluyveromyces lactis (strain ATCC 8585 / CBS 2359 / DSM 70799 / NBRC 1267 / NRRL Y-1140 / WM37) (Yeast).